Here is a 407-residue protein sequence, read N- to C-terminus: DNA-directed RNA polymerase subunit Rpo1C (407 aa).

The protein belongs to the RNA polymerase beta' chain family. In terms of assembly, part of the RNA polymerase complex.

The protein localises to the cytoplasm. It carries out the reaction RNA(n) + a ribonucleoside 5'-triphosphate = RNA(n+1) + diphosphate. In terms of biological role, DNA-dependent RNA polymerase (RNAP) catalyzes the transcription of DNA into RNA using the four ribonucleoside triphosphates as substrates. Forms part of the jaw domain. In Aeropyrum pernix (strain ATCC 700893 / DSM 11879 / JCM 9820 / NBRC 100138 / K1), this protein is DNA-directed RNA polymerase subunit Rpo1C.